A 224-amino-acid polypeptide reads, in one-letter code: ATP-dependent dethiobiotin synthetase BioD (224 aa).

14-19 (GIGKTV) lines the ATP pocket. T18 lines the Mg(2+) pocket. K39 is a catalytic residue. S43 contributes to the substrate binding site. ATP-binding positions include D56, 117-120 (EGVG), and 177-178 (NE). Mg(2+) is bound by residues D56 and E117.

It belongs to the dethiobiotin synthetase family. As to quaternary structure, homodimer. It depends on Mg(2+) as a cofactor.

It is found in the cytoplasm. The enzyme catalyses (7R,8S)-7,8-diammoniononanoate + CO2 + ATP = (4R,5S)-dethiobiotin + ADP + phosphate + 3 H(+). Its pathway is cofactor biosynthesis; biotin biosynthesis; biotin from 7,8-diaminononanoate: step 1/2. Catalyzes a mechanistically unusual reaction, the ATP-dependent insertion of CO2 between the N7 and N8 nitrogen atoms of 7,8-diaminopelargonic acid (DAPA, also called 7,8-diammoniononanoate) to form a ureido ring. This chain is ATP-dependent dethiobiotin synthetase BioD, found in Xanthomonas campestris pv. campestris (strain B100).